Here is a 344-residue protein sequence, read N- to C-terminus: Dihydroorotate dehydrogenase (quinone) (344 aa).

FMN is bound by residues 65 to 69 (AGLDK) and threonine 89. Lysine 69 is a substrate binding site. Residue 114 to 118 (NRMGF) coordinates substrate. The FMN site is built by asparagine 145 and asparagine 178. Asparagine 178 provides a ligand contact to substrate. Residue serine 181 is the Nucleophile of the active site. Asparagine 183 provides a ligand contact to substrate. 2 residues coordinate FMN: lysine 223 and threonine 251. Residue 252–253 (NT) coordinates substrate. FMN-binding positions include glycine 274, glycine 303, and 324 to 325 (YS).

It belongs to the dihydroorotate dehydrogenase family. Type 2 subfamily. As to quaternary structure, monomer. FMN serves as cofactor.

It is found in the cell membrane. It catalyses the reaction (S)-dihydroorotate + a quinone = orotate + a quinol. The protein operates within pyrimidine metabolism; UMP biosynthesis via de novo pathway; orotate from (S)-dihydroorotate (quinone route): step 1/1. In terms of biological role, catalyzes the conversion of dihydroorotate to orotate with quinone as electron acceptor. The polypeptide is Dihydroorotate dehydrogenase (quinone) (Cupriavidus pinatubonensis (strain JMP 134 / LMG 1197) (Cupriavidus necator (strain JMP 134))).